A 425-amino-acid chain; its full sequence is Polycomb protein esc (425 aa).

Basic and acidic residues predominate over residues 1–10 (MSSDKVKNGN). The segment at 1 to 64 (MSSDKVKNGN…KPKSRAAYKY (64 aa)) is disordered. Residues 11–20 (EPEESEESCG) show a composition bias toward acidic residues. Ser-15 carries the phosphoserine modification. Positions 21–42 (DESASYTTNSTTSRSKSPSSST) are enriched in low complexity. Basic residues predominate over residues 43–60 (RSKRRGRRSTKSKPKSRA). 7 WD repeats span residues 71 to 114 (NHGA…GMQL), 126 to 165 (VFYT…AVGN), 168 to 208 (GHGQ…CIAI), 214 to 253 (GHRD…FHHK), 284 to 321 (IHRN…QSFE), 340 to 379 (ECEI…PEGA), and 388 to 424 (RSVA…QTTS).

It belongs to the WD repeat ESC family. Component of the polycomb repressive complex 2 (PRC2, also known as the Esc/E(Z) complex), composed of Caf1-55, esc, E(z), Su(z)12, and possibly pho. PRC2 associates with the accessory components Jarid2 and jing to form the PRC2 Jarid2-jing variant (PRC2.2). PRC2 may also associate with Pcl and HDAC1/Rpd3 during early embryogenesis. This complex is distinct from the PRC1 complex, which contains many other PcG proteins like Pc, Ph, Psc, Su(z)2. The two complexes however cooperate and interact together during the first 3 hours of development to establish PcG silencing. Interacts with corto in vitro. Widely expressed.

It is found in the nucleus. Its function is as follows. Polycomb group (PcG) protein. While PcG proteins are generally required to maintain the transcriptionally repressive state of homeotic genes throughout development, this protein is specifically required during the first 6 hours of embryogenesis to establish the repressed state. Component of the Esc/E(z) complex, which methylates 'Lys-9' and 'Lys-27' residues of histone H3, leading to transcriptional repression of the affected target gene. The Esc/E(z) complex is necessary but not sufficient for the repression of homeotic target genes, suggesting that the recruitment of the distinct PRC1 complex is also required. This is Polycomb protein esc (esc) from Drosophila melanogaster (Fruit fly).